Consider the following 454-residue polypeptide: tRNA modification GTPase MnmE (454 aa).

(6S)-5-formyl-5,6,7,8-tetrahydrofolate contacts are provided by arginine 23, glutamate 80, and lysine 120. A TrmE-type G domain is found at 216-377; sequence GMKVVIAGRP…LRNHLKQSMG (162 aa). Asparagine 226 lines the K(+) pocket. Residues 226–231, 245–251, 270–273, 335–338, and 358–360 each bind GTP; these read NAGKSS, TDIAGTT, DTAG, NKAD, and SAR. Serine 230 lines the Mg(2+) pocket. K(+) contacts are provided by threonine 245, isoleucine 247, and threonine 250. Threonine 251 is a binding site for Mg(2+). Residue lysine 454 coordinates (6S)-5-formyl-5,6,7,8-tetrahydrofolate.

The protein belongs to the TRAFAC class TrmE-Era-EngA-EngB-Septin-like GTPase superfamily. TrmE GTPase family. Homodimer. Heterotetramer of two MnmE and two MnmG subunits. K(+) serves as cofactor.

It localises to the cytoplasm. Exhibits a very high intrinsic GTPase hydrolysis rate. Involved in the addition of a carboxymethylaminomethyl (cmnm) group at the wobble position (U34) of certain tRNAs, forming tRNA-cmnm(5)s(2)U34. The protein is tRNA modification GTPase MnmE of Salmonella gallinarum (strain 287/91 / NCTC 13346).